A 471-amino-acid polypeptide reads, in one-letter code: Glutamate--tRNA ligase (471 aa).

The 'HIGH' region signature appears at 9-19 (PSPTGYLHVGG). Residues Cys98, Cys100, Cys125, and His127 each contribute to the Zn(2+) site. Residues 237–241 (KLSKR) carry the 'KMSKS' region motif. ATP is bound at residue Lys240.

Belongs to the class-I aminoacyl-tRNA synthetase family. Glutamate--tRNA ligase type 1 subfamily. Monomer. Requires Zn(2+) as cofactor.

It is found in the cytoplasm. It catalyses the reaction tRNA(Glu) + L-glutamate + ATP = L-glutamyl-tRNA(Glu) + AMP + diphosphate. Functionally, catalyzes the attachment of glutamate to tRNA(Glu) in a two-step reaction: glutamate is first activated by ATP to form Glu-AMP and then transferred to the acceptor end of tRNA(Glu). The polypeptide is Glutamate--tRNA ligase (Escherichia coli (strain ATCC 8739 / DSM 1576 / NBRC 3972 / NCIMB 8545 / WDCM 00012 / Crooks)).